The following is a 66-amino-acid chain: Large ribosomal subunit protein bL33c (66 aa).

This sequence belongs to the bacterial ribosomal protein bL33 family.

Its subcellular location is the plastid. This Epifagus virginiana (Beechdrops) protein is Large ribosomal subunit protein bL33c (rpl33).